Consider the following 111-residue polypeptide: uncharacterized protein (111 aa).

The HIT domain maps to 4 to 111 (IFERIIEGAV…LGGGLLGSIA (108 aa)). A Histidine triad motif motif is present at residues 96-100 (HLHIH).

This is an uncharacterized protein from Chlamydia trachomatis serovar D (strain ATCC VR-885 / DSM 19411 / UW-3/Cx).